The chain runs to 387 residues: Alanine racemase (387 aa).

Lys38 acts as the Proton acceptor; specific for D-alanine in catalysis. Lys38 carries the N6-(pyridoxal phosphate)lysine modification. Arg136 is a binding site for substrate. The active-site Proton acceptor; specific for L-alanine is the Tyr267. Met316 contributes to the substrate binding site.

It belongs to the alanine racemase family. The cofactor is pyridoxal 5'-phosphate.

The catalysed reaction is L-alanine = D-alanine. It participates in amino-acid biosynthesis; D-alanine biosynthesis; D-alanine from L-alanine: step 1/1. Its function is as follows. Catalyzes the interconversion of L-alanine and D-alanine. May also act on other amino acids. The polypeptide is Alanine racemase (alr) (Clostridium tetani (strain Massachusetts / E88)).